The primary structure comprises 528 residues: ATP synthase subunit alpha (528 aa).

ATP is bound at residue 169–176; sequence GDRQTGKT.

It belongs to the ATPase alpha/beta chains family. F-type ATPases have 2 components, CF(1) - the catalytic core - and CF(0) - the membrane proton channel. CF(1) has five subunits: alpha(3), beta(3), gamma(1), delta(1), epsilon(1). CF(0) has three main subunits: a(1), b(2) and c(9-12). The alpha and beta chains form an alternating ring which encloses part of the gamma chain. CF(1) is attached to CF(0) by a central stalk formed by the gamma and epsilon chains, while a peripheral stalk is formed by the delta and b chains.

The protein localises to the cell membrane. The enzyme catalyses ATP + H2O + 4 H(+)(in) = ADP + phosphate + 5 H(+)(out). In terms of biological role, produces ATP from ADP in the presence of a proton gradient across the membrane. The alpha chain is a regulatory subunit. In Mycoplasmopsis agalactiae (strain NCTC 10123 / CIP 59.7 / PG2) (Mycoplasma agalactiae), this protein is ATP synthase subunit alpha.